We begin with the raw amino-acid sequence, 153 residues long: NAD(P)H-quinone oxidoreductase subunit N (153 aa).

It belongs to the complex I NdhN subunit family. NDH-1 can be composed of about 15 different subunits; different subcomplexes with different compositions have been identified which probably have different functions.

It localises to the cellular thylakoid membrane. The catalysed reaction is a plastoquinone + NADH + (n+1) H(+)(in) = a plastoquinol + NAD(+) + n H(+)(out). It carries out the reaction a plastoquinone + NADPH + (n+1) H(+)(in) = a plastoquinol + NADP(+) + n H(+)(out). NDH-1 shuttles electrons from an unknown electron donor, via FMN and iron-sulfur (Fe-S) centers, to quinones in the respiratory and/or the photosynthetic chain. The immediate electron acceptor for the enzyme in this species is believed to be plastoquinone. Couples the redox reaction to proton translocation, and thus conserves the redox energy in a proton gradient. Cyanobacterial NDH-1 also plays a role in inorganic carbon-concentration. The protein is NAD(P)H-quinone oxidoreductase subunit N of Prochlorococcus marinus (strain MIT 9313).